Here is a 725-residue protein sequence, read N- to C-terminus: D-(-)-3-hydroxybutyrate oligomer hydrolase (725 aa).

The first 22 residues, Met1–Ala22, serve as a signal peptide directing secretion. The active-site Charge relay system is Ser322.

It belongs to the D-(-)-3-hydroxybutyrate oligomer hydrolase family.

It is found in the secreted. The catalysed reaction is (3R)-hydroxybutanoate dimer + H2O = 2 (R)-3-hydroxybutanoate + H(+). Its pathway is lipid metabolism; butanoate metabolism. Participates in the degradation of poly-3-hydroxybutyrate (PHB). It works downstream of poly(3-hydroxybutyrate) depolymerase, hydrolyzing D(-)-3-hydroxybutyrate oligomers of various length (3HB-oligomers) into 3HB-monomers. This is D-(-)-3-hydroxybutyrate oligomer hydrolase from Ralstonia nicotianae (strain ATCC BAA-1114 / GMI1000) (Ralstonia solanacearum).